We begin with the raw amino-acid sequence, 382 residues long: Lipid-A-disaccharide synthase (382 aa).

This sequence belongs to the LpxB family.

It catalyses the reaction a lipid X + a UDP-2-N,3-O-bis[(3R)-3-hydroxyacyl]-alpha-D-glucosamine = a lipid A disaccharide + UDP + H(+). Its pathway is bacterial outer membrane biogenesis; LPS lipid A biosynthesis. In terms of biological role, condensation of UDP-2,3-diacylglucosamine and 2,3-diacylglucosamine-1-phosphate to form lipid A disaccharide, a precursor of lipid A, a phosphorylated glycolipid that anchors the lipopolysaccharide to the outer membrane of the cell. The protein is Lipid-A-disaccharide synthase of Alkalilimnicola ehrlichii (strain ATCC BAA-1101 / DSM 17681 / MLHE-1).